The chain runs to 175 residues: Peptide deformylase (175 aa).

Cysteine 92 and histidine 134 together coordinate Fe cation. Glutamate 135 is an active-site residue. Histidine 138 provides a ligand contact to Fe cation.

Belongs to the polypeptide deformylase family. It depends on Fe(2+) as a cofactor.

It catalyses the reaction N-terminal N-formyl-L-methionyl-[peptide] + H2O = N-terminal L-methionyl-[peptide] + formate. Removes the formyl group from the N-terminal Met of newly synthesized proteins. Requires at least a dipeptide for an efficient rate of reaction. N-terminal L-methionine is a prerequisite for activity but the enzyme has broad specificity at other positions. This chain is Peptide deformylase, found in Blochmanniella floridana.